The primary structure comprises 41 residues: uncharacterized protein (41 aa).

The protein resides in the plastid. It is found in the chloroplast. This is an uncharacterized protein from Trieres chinensis (Marine centric diatom).